Consider the following 461-residue polypeptide: Phosphatidate cytidylyltransferase 1 (461 aa).

Residues 1 to 68 (MLELRHRGGC…PEVPPSSDRT (68 aa)) are disordered. Omega-N-methylarginine is present on Arg7. Basic and acidic residues predominate over residues 22–56 (REGEAAGGDHETESTSDKETDIDDRYGDLDARGDS). A phosphoserine mark is found at Ser35 and Ser37. 6 helical membrane passes run 96-116 (MISL…LLVL), 149-169 (FLLC…FATF), 183-203 (HRFI…LSLV), 230-250 (LVIQ…SSVI), 279-299 (GFIG…YVLS), and 357-377 (IALS…ASGF).

The protein belongs to the CDS family. As to quaternary structure, homodimer. Interacts with FOS; this interaction may enhance catalytic activity. It depends on Mg(2+) as a cofactor. As to expression, brain, retina and testis. Found in cerebellar Purkinje cells, pineal body, inner segment of photoreceptor cells and postmitotic spermatocytes and spermatids.

Its subcellular location is the endoplasmic reticulum membrane. It catalyses the reaction a 1,2-diacyl-sn-glycero-3-phosphate + CTP + H(+) = a CDP-1,2-diacyl-sn-glycerol + diphosphate. It carries out the reaction 1-octadecanoyl-2-(5Z,8Z,11Z,14Z-eicosatetraenoyl)-sn-glycero-3-phosphate + CTP + H(+) = 1-octadecanoyl-2-(5Z,8Z,11Z,14Z-eicosatetraenoyl)-sn-glycero-3-cytidine-5'-diphosphate + diphosphate. The enzyme catalyses 1-octadecanoyl-2-(9Z,12Z-octadecadienoyl)-sn-glycero-3-phosphate + CTP + H(+) = 1-octadecanoyl-2-(9Z,12Z-octadecadienoyl)-sn-glycero-3-cytidine-5'-diphosphate + diphosphate. The catalysed reaction is 1-hexadecanoyl-2-(5Z,8Z,11Z,14Z-eicosatetraenoyl)-sn-glycero-3-phosphate + CTP + H(+) = 1-hexadecanoyl-2-(5Z,8Z,11Z,14Z-eicosatetraenoyl)-sn-glycero-3-cytidine-5'-diphosphate + diphosphate. It catalyses the reaction 1,2-di-(5Z,8Z,11Z,14Z)-eicosatetraenoyl-sn-glycero-3-phosphate + CTP + H(+) = 1,2-di-(5Z,8Z,11Z,14Z-eicosatetraenoyl)-sn-glycero-3-cytidine-5'-diphosphate + diphosphate. It carries out the reaction 1-octadecanoyl-2-(9Z-octadecenoyl)-sn-glycero-3-phosphate + CTP + H(+) = 1-octadecanoyl-2-(9Z-octadecenoyl)-sn-glycero-3-cytidine-5'-diphosphate + diphosphate. The enzyme catalyses 1-octadecanoyl-2-(4Z,7Z,10Z,13Z,16Z,19Z-docosahexaenoyl)-sn-glycero-3-phosphate + CTP + H(+) = 1-octadecanoyl-2-(4Z,7Z,10Z,13Z,16Z,19Z-docosahexaenoyl)-sn-glycero-3-cytidine-5'-diphosphate + diphosphate. The catalysed reaction is 1,2-di-(9Z,12Z-octadecadienoyl)-sn-glycero-3-phosphate + CTP + H(+) = 1,2-di-(9Z,12Z-octadecadienoyl)-sn-glycero-3-cytidine-5'-diphosphate + diphosphate. It catalyses the reaction 1,2-di-(9Z-octadecenoyl)-sn-glycero-3-phosphate + CTP + H(+) = 1,2-di-(9Z-octadecenoyl)-sn-glycero-3-cytidine-5'-diphosphate + diphosphate. The protein operates within phospholipid metabolism; CDP-diacylglycerol biosynthesis; CDP-diacylglycerol from sn-glycerol 3-phosphate: step 3/3. Activated by GTP. Inhibited by CDP-diacylglycerol and by phosphatidylglycerol 4,5-bisphosphate (PPI2). In terms of biological role, catalyzes the conversion of phosphatidic acid (PA) to CDP-diacylglycerol (CDP-DAG), an essential intermediate in the synthesis of phosphatidylglycerol, cardiolipin and phosphatidylinositol. Exhibits almost no acyl chain preference for PA, showing no discrimination for the sn-1/sn-2 acyl chain composition of PAs. Plays an important role in regulatinng the growth of lipid droplets which are storage organelles at the center of lipid and energy homeostasis. Positively regulates the differentiation and development of adipocytes. The sequence is that of Phosphatidate cytidylyltransferase 1 from Rattus norvegicus (Rat).